We begin with the raw amino-acid sequence, 135 residues long: ATP synthase epsilon chain (135 aa).

This sequence belongs to the ATPase epsilon chain family. As to quaternary structure, F-type ATPases have 2 components, CF(1) - the catalytic core - and CF(0) - the membrane proton channel. CF(1) has five subunits: alpha(3), beta(3), gamma(1), delta(1), epsilon(1). CF(0) has three main subunits: a, b and c.

It is found in the cell inner membrane. Its function is as follows. Produces ATP from ADP in the presence of a proton gradient across the membrane. This Rhizobium etli (strain ATCC 51251 / DSM 11541 / JCM 21823 / NBRC 15573 / CFN 42) protein is ATP synthase epsilon chain.